Consider the following 474-residue polypeptide: Probable threonine--tRNA ligase, mitochondrial (474 aa).

A mitochondrion-targeting transit peptide spans 1–27 (MMKLKKFQLHTPFAHSCNRVEIYTARF).

Belongs to the class-II aminoacyl-tRNA synthetase family.

Its subcellular location is the mitochondrion matrix. It catalyses the reaction tRNA(Thr) + L-threonine + ATP = L-threonyl-tRNA(Thr) + AMP + diphosphate + H(+). The chain is Probable threonine--tRNA ligase, mitochondrial from Schizosaccharomyces pombe (strain 972 / ATCC 24843) (Fission yeast).